The sequence spans 471 residues: Citrate synthase, mitochondrial (471 aa).

Residues His-309, His-355, and Asp-409 contribute to the active site.

It belongs to the citrate synthase family. As to quaternary structure, homodimer. As to expression, ubiquitous.

Its subcellular location is the mitochondrion matrix. The catalysed reaction is oxaloacetate + acetyl-CoA + H2O = citrate + CoA + H(+). Its pathway is carbohydrate metabolism; tricarboxylic acid cycle; isocitrate from oxaloacetate: step 1/2. This Solanum tuberosum (Potato) protein is Citrate synthase, mitochondrial.